The primary structure comprises 481 residues: MTVSYQLDVSSGNPLLFLRLLGRWRGSIWKSVVGDLFVWLLFYYAIYFAYRYAFSKQLQTVFEEISIHTDDRMKYLPLTFMLGFFVTTVFERWRSALNVMPFIESVALSVAVLLPGKGREDRLTRRAIIRYVVLHQILVFRDISMRVRRRFPTLKYVVDAGFMRQEELDVLESVNQESSQTYWVPINWANSLALVAHQQKLIDQPTAFNNVIFAIKEFRVAMETLIKFDAIPIPIAYPQVVFLAVRVYFAICLVSRQFLISDMKSKTQMDWPVPIMTVLEFIFVIGWMKVAEVLLNPLGEDDDDFEVNSIIDNNISRGMAIVDTTHGYHPDLVDDVFSDPNYLPAYSENSQIPRNLTGSAAKVELAAPTDEVKIVRVNPEDAPPTSERGSMFTRRNAYSLRNRKISIASNNLESPSQERKFNLSMPAGMLNKSTQPDRPTMETVSEEHEPSHFYRGDRVHSSDSGLSKTQQSSEESVDKKG.

Residues 1 to 27 (MTVSYQLDVSSGNPLLFLRLLGRWRGS) lie on the Cytoplasmic side of the membrane. The helical transmembrane segment at 28-48 (IWKSVVGDLFVWLLFYYAIYF) threads the bilayer. Residues 49–95 (AYRYAFSKQLQTVFEEISIHTDDRMKYLPLTFMLGFFVTTVFERWRS) are Extracellular-facing. A helical transmembrane segment spans residues 96–116 (ALNVMPFIESVALSVAVLLPG). Topologically, residues 117 to 230 (KGREDRLTRR…AMETLIKFDA (114 aa)) are cytoplasmic. A helical transmembrane segment spans residues 231–251 (IPIPIAYPQVVFLAVRVYFAI). The Extracellular portion of the chain corresponds to 252–274 (CLVSRQFLISDMKSKTQMDWPVP). Residues 275-295 (IMTVLEFIFVIGWMKVAEVLL) traverse the membrane as a helical segment. Residues 296–481 (NPLGEDDDDF…SSEESVDKKG (186 aa)) are Cytoplasmic-facing. The interval 427 to 481 (AGMLNKSTQPDRPTMETVSEEHEPSHFYRGDRVHSSDSGLSKTQQSSEESVDKKG) is disordered. Positions 445-461 (SEEHEPSHFYRGDRVHS) are enriched in basic and acidic residues. Positions 462–474 (SDSGLSKTQQSSE) are enriched in polar residues.

This sequence belongs to the anion channel-forming bestrophin (TC 1.A.46) family. Calcium-sensitive chloride channel subfamily. In terms of assembly, forms oligomers.

It is found in the cell membrane. Functionally, forms chloride channels. This is Bestrophin homolog 17 from Caenorhabditis elegans.